We begin with the raw amino-acid sequence, 1865 residues long: Transient receptor potential cation channel subfamily M member 7 (1865 aa).

The residue at position 1 (methionine 1) is an N-acetylmethionine. Topologically, residues 1–850 (MSQKSWIEST…ITRKFYAFYH (850 aa)) are cytoplasmic. Position 101 is a phosphoserine (serine 101). The segment covering 544-555 (NRRSGRNTSSST) has biased composition (low complexity). The interval 544–575 (NRRSGRNTSSSTPQLRKSHESFGNRADKKEKM) is disordered. Over residues 560 to 573 (KSHESFGNRADKKE) the composition is skewed to basic and acidic residues. The helical transmembrane segment at 851–876 (APIVKFWFNTLAYLGFLMLYTFVVLV) threads the bilayer. The Extracellular portion of the chain corresponds to 877 to 882 (QMEQLP). The chain crosses the membrane as a helical span at residues 883–904 (SVQEWIVIAYIFTYAIEKVREI). Residues 905–923 (FMSEAGKVNQKIKVWFSDY) are Cytoplasmic-facing. A helical transmembrane segment spans residues 924-943 (FNISDTIAIISFFIGFGLRF). At 944-956 (GAKWNFANAYDNH) the chain is on the extracellular side. A helical transmembrane segment spans residues 957–980 (VFVAGRLIYCLNIIFWYVRLLDFL). The Cytoplasmic portion of the chain corresponds to 981 to 999 (AVNQQAGPYVMMIGKMVAN). The helical transmembrane segment at 1000-1023 (MFYIVVIMALVLLSFGVPRKAILY) threads the bilayer. The Extracellular portion of the chain corresponds to 1024 to 1025 (PH). The segment at residues 1026-1066 (EAPSWTLAKDIVFHPYWMIFGEVYAYEIDVCANDSVIPQIC) is an intramembrane region (pore-forming). The Extracellular portion of the chain corresponds to 1067–1069 (GPG). Residues 1070–1098 (TWLTPFLQAVYLFVQYIIMVNLLIAFFNN) form a helical membrane-spanning segment. Over 1099-1865 (VYLQVKAISN…ESTNSVRLML (767 aa)) the chain is Cytoplasmic. S-palmitoyl cysteine attachment occurs at residues cysteine 1143, cysteine 1144, and cysteine 1146. At threonine 1163 the chain carries Phosphothreonine; by autocatalysis. Serine 1191 and serine 1193 each carry phosphoserine; by autocatalysis. Positions 1198 to 1250 (RVTFERVEQMCIQIKEVGDRVNYIKRSLQSLDSQIGHLQDLSALTVDTLKTLT) form a coiled coil. Serine 1224 is subject to Phosphoserine. Residues serine 1255 and serine 1258 each carry the phosphoserine; by autocatalysis modification. Threonine 1265 bears the Phosphothreonine; by autocatalysis mark. Residue serine 1287 is modified to Phosphoserine; by autocatalysis. Serine 1301 carries the phosphoserine modification. Phosphoserine; by autocatalysis is present on serine 1358. Serine 1361 and serine 1386 each carry phosphoserine. Residues 1386 to 1398 (SSSTSIPHLSSPP) show a composition bias toward low complexity. Positions 1386 to 1407 (SSSTSIPHLSSPPTKFFVSTPS) are disordered. A phosphoserine; by autocatalysis mark is found at serine 1387 and serine 1390. 2 positions are modified to phosphoserine: serine 1395 and serine 1396. Position 1404 is a phosphoserine; by autocatalysis (serine 1404). The residue at position 1405 (threonine 1405) is a Phosphothreonine; by autocatalysis. Serine 1407 bears the Phosphoserine; by autocatalysis mark. At threonine 1435 the chain carries Phosphothreonine; by autocatalysis. Serine 1446 is subject to Phosphoserine; by autocatalysis. Threonine 1455 is modified (phosphothreonine; by autocatalysis). Residues serine 1456 and serine 1463 each carry the phosphoserine; by autocatalysis modification. Threonine 1467 bears the Phosphothreonine mark. Phosphoserine; by autocatalysis is present on serine 1468. Threonine 1471 bears the Phosphothreonine; by autocatalysis mark. Residues serine 1476 and serine 1477 each carry the phosphoserine; by autocatalysis modification. Position 1482 is a phosphothreonine; by autocatalysis (threonine 1482). The disordered stretch occupies residues 1492-1511 (HSKQAEKISRRPSTEDTHEV). Serine 1493 bears the Phosphoserine; by autocatalysis mark. The segment covering 1494–1511 (KQAEKISRRPSTEDTHEV) has biased composition (basic and acidic residues). A Phosphoserine modification is found at serine 1500. At serine 1504 the chain carries Phosphoserine; by autocatalysis. Residue threonine 1508 is modified to Phosphothreonine; by autocatalysis. 3 positions are modified to phosphoserine; by autocatalysis: serine 1513, serine 1527, and serine 1533. The segment at 1524 to 1543 (DRPSNREMPSEEGTLNGLTS) is disordered. Residues threonine 1537 and threonine 1542 each carry the phosphothreonine; by autocatalysis modification. A Phosphoserine; by autocatalysis modification is found at serine 1543. A Phosphothreonine; by autocatalysis modification is found at threonine 1551. A phosphoserine; by autocatalysis mark is found at serine 1567 and serine 1569. A Phosphothreonine; by autocatalysis modification is found at threonine 1583. Residues 1594–1824 (ILNNSMSSWS…CCRKLKLPDL (231 aa)) enclose the Alpha-type protein kinase domain. Residues serine 1598 and serine 1615 each carry the phosphoserine; by autocatalysis modification. Residues glycine 1621, glycine 1622, leucine 1623, arginine 1624, and lysine 1648 each coordinate ADP. Phosphoserine; by autocatalysis is present on serine 1660. A Phosphothreonine; by autocatalysis modification is found at threonine 1685. Positions 1720, 1721, and 1723 each coordinate ADP. Residue histidine 1753 participates in Zn(2+) binding. The active-site Proton acceptor is aspartate 1767. Residue aspartate 1777 participates in ADP binding. Serine 1779 carries the phosphoserine; by autocatalysis modification. Zn(2+) is bound by residues histidine 1810, cysteine 1812, and cysteine 1816. The residue at position 1830 (threonine 1830) is a Phosphothreonine; by autocatalysis. The tract at residues 1836–1865 (FPQDEPSDLNLQPGNSTKESESTNSVRLML) is disordered. A compositionally biased stretch (polar residues) spans 1844 to 1865 (LNLQPGNSTKESESTNSVRLML). Serine 1851 carries the post-translational modification Phosphoserine. Phosphoserine; by autocatalysis is present on serine 1860.

In the C-terminal section; belongs to the protein kinase superfamily. Alpha-type protein kinase family. ALPK subfamily. It in the N-terminal section; belongs to the transient receptor (TC 1.A.4) family. LTrpC subfamily. TRPM7 sub-subfamily. Homotetramer. Interacts with PLCB1. Forms heteromers with TRPM6; heteromeric channels are functionally different from the homomeric channels. Zn(2+) serves as cofactor. Post-translationally, palmitoylated; palmitoylation at Cys-1143, Cys-1144 and Cys-1146 promotes TRPM7 trafficking from the Golgi to the surface membrane. Autophosphorylated; autophosphorylation of C-terminus regulates TRPM7 kinase activity towards its substrates. In terms of processing, the C-terminal kinase domain can be cleaved from the channel segment in a cell-type-specific fashion. TRPM7 is cleaved by caspase-8, dissociating the kinase from the ion-conducting pore. The cleaved kinase fragments (M7CKs) can translocate to the cell nucleus and binds chromatin-remodeling complex proteins in a Zn(2+)-dependent manner to ultimately phosphorylate specific Ser/Thr residues of histones.

Its subcellular location is the cell membrane. The protein resides in the cytoplasmic vesicle membrane. It is found in the nucleus. It catalyses the reaction L-seryl-[protein] + ATP = O-phospho-L-seryl-[protein] + ADP + H(+). It carries out the reaction L-threonyl-[protein] + ATP = O-phospho-L-threonyl-[protein] + ADP + H(+). The catalysed reaction is Mg(2+)(in) = Mg(2+)(out). The enzyme catalyses Ca(2+)(in) = Ca(2+)(out). It catalyses the reaction Zn(2+)(in) = Zn(2+)(out). With respect to regulation, channel displays constitutive activity. Channel activity is negatively regulated by cytosolic Mg(2+) and Mg-ATP. Channel activity is negatively regulated by low intracellular pH. Resting free cytosolic Mg(2+) and Mg-ATP concentrations seem to be sufficient to block native TRPM7 channel activity. TRPM7 channel activity is highly dependent on membrane levels of phosphatidylinositol 4,5 bisphosphate (PIP2). PIP2 hydrolysis negatively regulates TRPM7 channel activity. TRPM7 kinase activity does not affect channel activity. The kinase activity is controlled through the autophosphorylation of a serine/threonine-rich region located N-terminal to the catalytic domain. Bifunctional protein that combines an ion channel with an intrinsic kinase domain, enabling it to modulate cellular functions either by conducting ions through the pore or by phosphorylating downstream proteins via its kinase domain. The channel is highly permeable to divalent cations, specifically calcium (Ca2+), magnesium (Mg2+) and zinc (Zn2+) and mediates their influx. Controls a wide range of biological processes such as Ca2(+), Mg(2+) and Zn(2+) homeostasis, vesicular Zn(2+) release channel and intracellular Ca(2+) signaling, embryonic development, immune responses, cell motility, proliferation and differentiation. The C-terminal alpha-kinase domain autophosphorylates cytoplasmic residues of TRPM7. In vivo, TRPM7 phosphorylates SMAD2, suggesting that TRPM7 kinase may play a role in activating SMAD signaling pathways. In vitro, TRPM7 kinase phosphorylates ANXA1 (annexin A1), myosin II isoforms and a variety of proteins with diverse cellular functions. Its function is as follows. The cleaved channel exhibits substantially higher current and potentiates Fas receptor signaling. Functionally, the C-terminal kinase domain can be cleaved from the channel segment in a cell-type-specific fashion. In immune cells, the TRPM7 kinase domain is clipped from the channel domain by caspases in response to Fas-receptor stimulation. The cleaved kinase fragments can translocate to the nucleus, and bind chromatin-remodeling complex proteins in a Zn(2+)-dependent manner to ultimately phosphorylate specific Ser/Thr residues of histones known to be functionally important for cell differentiation and embryonic development. The polypeptide is Transient receptor potential cation channel subfamily M member 7 (TRPM7) (Homo sapiens (Human)).